The sequence spans 142 residues: Galectin-16 (142 aa).

One can recognise a Galectin domain in the interval 6–138; sequence VPYKLPVSLS…DVSLDSVLVN (133 aa).

Predominantly and highly expressed in the placenta where it is localized mainly in the syncytiotrophoblast and in the endothelia of fetal vessels. Also detected in the amnion and chorionic trophoblasts in fetal membranes.

Its function is as follows. Binds lactose with high affinity. Strong inducer of T-cell apoptosis. In Homo sapiens (Human), this protein is Galectin-16.